We begin with the raw amino-acid sequence, 315 residues long: Porphobilinogen deaminase (315 aa).

Cysteine 234 carries the post-translational modification S-(dipyrrolylmethanemethyl)cysteine.

It belongs to the HMBS family. Monomer. The cofactor is dipyrromethane.

The enzyme catalyses 4 porphobilinogen + H2O = hydroxymethylbilane + 4 NH4(+). The protein operates within porphyrin-containing compound metabolism; protoporphyrin-IX biosynthesis; coproporphyrinogen-III from 5-aminolevulinate: step 2/4. Tetrapolymerization of the monopyrrole PBG into the hydroxymethylbilane pre-uroporphyrinogen in several discrete steps. This is Porphobilinogen deaminase from Mycolicibacterium paratuberculosis (strain ATCC BAA-968 / K-10) (Mycobacterium paratuberculosis).